The sequence spans 201 residues: Probable GTP-binding protein EngB (201 aa).

The EngB-type G domain occupies 25 to 199 (HGIEIAFIGY…KSKLNFWYEK (175 aa)). GTP contacts are provided by residues 33–40 (GYSNSGKS), 60–64 (GRTQL), 78–81 (DLPG), 145–148 (TKCD), and 178–180 (FSS). Mg(2+) is bound by residues Ser40 and Thr62.

Belongs to the TRAFAC class TrmE-Era-EngA-EngB-Septin-like GTPase superfamily. EngB GTPase family. Requires Mg(2+) as cofactor.

Functionally, necessary for normal cell division and for the maintenance of normal septation. This is Probable GTP-binding protein EngB from Buchnera aphidicola subsp. Schizaphis graminum (strain Sg).